The chain runs to 816 residues: Phosphatidylinositol 4-kinase beta (816 aa).

3 disordered regions span residues 1-30 (MGDT…GSLL), 99-120 (EEED…RRRR), and 248-318 (AHRK…SFSS). Glycine 2 carries the post-translational modification N-acetylglycine. The tract at residues 2–68 (GDTVVEPAPL…VKLLHGGVAV (67 aa)) is interaction with ACBD3. Positions 52 to 242 (CQDVLEKVKL…GTKLRKLILS (191 aa)) constitute a PIK helical domain. Serine 258 is modified (phosphoserine). Threonine 263 is subject to Phosphothreonine. 5 positions are modified to phosphoserine: serine 266, serine 275, serine 277, serine 284, and serine 294. 2 stretches are compositionally biased toward polar residues: residues 278-297 (DATA…SNPK) and 306-318 (SSST…SFSS). Serine 428 bears the Phosphoserine mark. Position 438 is a phosphothreonine (threonine 438). The residue at position 511 (serine 511) is a Phosphoserine. A phosphothreonine mark is found at threonine 517 and threonine 519. The PI3K/PI4K catalytic domain maps to 535–801 (EPWQEKVRRI…MVDGSMRSIT (267 aa)). Positions 541–547 (VRRIREG) are G-loop. The segment at 668–676 (QVKDRHNGN) is catalytic loop. Positions 687-711 (HIDFGFILSSSPRNLGFETSAFKLT) are activation loop.

This sequence belongs to the PI3/PI4-kinase family. Type III PI4K subfamily. In terms of assembly, interacts with ARF1 and ARF3 in the Golgi complex, but not with ARF4, ARF5 or ARF6. Interacts with NCS1/FREQ in a calcium-independent manner. Interacts with CALN1/CABP8 and CALN2/CABP7; in a calcium-dependent manner; this interaction competes with NCS1/FREQ binding. Interacts with ACBD3. Interacts with ARMH3, YWHAB, YWHAE, YWHAG, YWHAH, YWHAQ, YWHAZ and SFN. Interacts with GGA2 (via VHS domain); the interaction is important for PI4KB location at the Golgi apparatus membrane. Interacts with ATG9A. The cofactor is Mg(2+). Requires Mn(2+) as cofactor.

The protein localises to the endomembrane system. The protein resides in the mitochondrion outer membrane. It localises to the rough endoplasmic reticulum membrane. It is found in the golgi apparatus. Its subcellular location is the golgi apparatus membrane. It carries out the reaction a 1,2-diacyl-sn-glycero-3-phospho-(1D-myo-inositol) + ATP = a 1,2-diacyl-sn-glycero-3-phospho-(1D-myo-inositol 4-phosphate) + ADP + H(+). Inhibited by wortmannin. Increased kinase activity upon interaction with NCS1/FREQ. Phosphorylates phosphatidylinositol (PI) in the first committed step in the production of the second messenger inositol-1,4,5,-trisphosphate (PIP). May regulate Golgi disintegration/reorganization during mitosis, possibly via its phosphorylation. Involved in Golgi-to-plasma membrane trafficking. The chain is Phosphatidylinositol 4-kinase beta (PI4KB) from Callithrix jacchus (White-tufted-ear marmoset).